We begin with the raw amino-acid sequence, 696 residues long: Translation factor waclaw, mitochondrial (696 aa).

The transit peptide at 1-76 (MIVGYSVFFH…RNLSTTNQVK (76 aa)) directs the protein to the mitochondrion. The tr-type G domain maps to 97–278 (ERIRNFSIIA…RVIETVPPPQ (182 aa)). Residues 106-113 (AHVDHGKS), 171-175 (DTPGH), and 225-228 (NKID) contribute to the GTP site.

This sequence belongs to the TRAFAC class translation factor GTPase superfamily. Classic translation factor GTPase family. LepA subfamily.

It localises to the mitochondrion inner membrane. The catalysed reaction is GTP + H2O = GDP + phosphate + H(+). In terms of biological role, promotes mitochondrial protein synthesis. May act as a fidelity factor of the translation reaction, by catalyzing a one-codon backward translocation of tRNAs on improperly translocated ribosomes. Binds to mitochondrial ribosomes in a GTP-dependent manner. In Drosophila melanogaster (Fruit fly), this protein is Translation factor waclaw, mitochondrial.